A 140-amino-acid chain; its full sequence is Ribosome-binding factor A (140 aa).

Belongs to the RbfA family. Monomer. Binds 30S ribosomal subunits, but not 50S ribosomal subunits or 70S ribosomes.

The protein localises to the cytoplasm. One of several proteins that assist in the late maturation steps of the functional core of the 30S ribosomal subunit. Associates with free 30S ribosomal subunits (but not with 30S subunits that are part of 70S ribosomes or polysomes). Required for efficient processing of 16S rRNA. May interact with the 5'-terminal helix region of 16S rRNA. This Cereibacter sphaeroides (strain ATCC 17025 / ATH 2.4.3) (Rhodobacter sphaeroides) protein is Ribosome-binding factor A.